A 345-amino-acid chain; its full sequence is Histidinol-phosphate aminotransferase (345 aa).

At lysine 206 the chain carries N6-(pyridoxal phosphate)lysine.

The protein belongs to the class-II pyridoxal-phosphate-dependent aminotransferase family. Histidinol-phosphate aminotransferase subfamily. As to quaternary structure, homodimer. The cofactor is pyridoxal 5'-phosphate.

The enzyme catalyses L-histidinol phosphate + 2-oxoglutarate = 3-(imidazol-4-yl)-2-oxopropyl phosphate + L-glutamate. The protein operates within amino-acid biosynthesis; L-histidine biosynthesis; L-histidine from 5-phospho-alpha-D-ribose 1-diphosphate: step 7/9. This Bacteroides fragilis (strain YCH46) protein is Histidinol-phosphate aminotransferase.